The sequence spans 211 residues: Ubiquitin-conjugating enzyme E2 S-B (211 aa).

A UBC core domain is found at 11-157 (HIIRRVYKEV…ARLMTDIHAQ (147 aa)). The active-site Glycyl thioester intermediate is the Cys95. Residues 158-211 (GTSLRGKDPTDPCSSASTPVVSGDGPMAKKHAGDRDKKLAAKKKTDKKRALRRL) are disordered. A compositionally biased stretch (basic residues) spans 197-211 (AAKKKTDKKRALRRL).

The protein belongs to the ubiquitin-conjugating enzyme family.

The catalysed reaction is S-ubiquitinyl-[E1 ubiquitin-activating enzyme]-L-cysteine + [E2 ubiquitin-conjugating enzyme]-L-cysteine = [E1 ubiquitin-activating enzyme]-L-cysteine + S-ubiquitinyl-[E2 ubiquitin-conjugating enzyme]-L-cysteine.. It functions in the pathway protein modification; protein ubiquitination. Its function is as follows. Catalyzes the covalent attachment of ubiquitin to other proteins. Acts as an essential factor of the anaphase promoting complex/cyclosome (APC/C), a cell cycle-regulated ubiquitin ligase that controls progression through mitosis. Acts by specifically elongating 'Lys-11'-linked polyubiquitin chains initiated by the E2 enzyme ube2c/ubch10 on APC/C substrates, enhancing the degradation of APC/C substrates by the proteasome and promoting mitotic exit. The sequence is that of Ubiquitin-conjugating enzyme E2 S-B (ube2s-b) from Xenopus laevis (African clawed frog).